A 39-amino-acid chain; its full sequence is Cytochrome b559 subunit beta (39 aa).

The helical transmembrane segment at 14–30 threads the bilayer; the sequence is WLTVHGLAVPTVSFLGS. H18 serves as a coordination point for heme.

It belongs to the PsbE/PsbF family. In terms of assembly, heterodimer of an alpha subunit and a beta subunit. PSII is composed of 1 copy each of membrane proteins PsbA, PsbB, PsbC, PsbD, PsbE, PsbF, PsbH, PsbI, PsbJ, PsbK, PsbL, PsbM, PsbT, PsbX, PsbY, PsbZ, Psb30/Ycf12, at least 3 peripheral proteins of the oxygen-evolving complex and a large number of cofactors. It forms dimeric complexes. Heme b is required as a cofactor.

It is found in the plastid. The protein localises to the chloroplast thylakoid membrane. Its function is as follows. This b-type cytochrome is tightly associated with the reaction center of photosystem II (PSII). PSII is a light-driven water:plastoquinone oxidoreductase that uses light energy to abstract electrons from H(2)O, generating O(2) and a proton gradient subsequently used for ATP formation. It consists of a core antenna complex that captures photons, and an electron transfer chain that converts photonic excitation into a charge separation. The sequence is that of Cytochrome b559 subunit beta from Lactuca sativa (Garden lettuce).